Reading from the N-terminus, the 826-residue chain is Homeobox-leucine zipper protein HDG5 (826 aa).

Disordered regions lie at residues 1-34 and 69-119; these read MLTMGEGNVMTSNNRFASPPQQPSSSSPGTIQNP and EMME…HRHT. Over residues 23 to 34 the composition is skewed to low complexity; it reads PSSSSPGTIQNP. The segment covering 88-105 has biased composition (basic and acidic residues); that stretch reads EDPKFGNESDVNELHDDE. Residues 110–119 show a composition bias toward basic residues; that stretch reads AKKKRYHRHT. The segment at residues 111–170 is a DNA-binding region (homeobox); the sequence is KKKRYHRHTNRQIQEMEALFKENPHPDDKQRKRLSAELGLKPRQVKFWFQNRRTQMKAQQ. Residues 165–189 adopt a coiled-coil conformation; it reads QMKAQQDRNENVMLRAENDNLKSEN. The START domain occupies 314-558; that stretch reads ADEEKVIAME…LQRQCERIAS (245 aa).

It belongs to the HD-ZIP homeobox family. Class IV subfamily. Expressed in shoot apical meristem (SAM) with higher levels in L1 cells and the epidermal layer of young leaves. Expressed in the L1 of apical inflorescence meristems, early flower primordia, carpel and stamen filament epidermis, ovule primordia, nucellus and chalaze.

Its subcellular location is the nucleus. Probable transcription factor. Involved, together with PDF2, in the regulation of flower organs development by promoting the expression of APETALA 3 (AP3) in the epidermis and internal cell layers of developing flowers. The protein is Homeobox-leucine zipper protein HDG5 of Arabidopsis thaliana (Mouse-ear cress).